We begin with the raw amino-acid sequence, 226 residues long: ATP synthase F(0) complex subunit a (226 aa).

6 helical membrane-spanning segments follow: residues 6–26 (FASF…IVLF), 68–88 (WTLM…LGLL), 97–117 (QLSM…ITGF), 138–158 (IPML…ALAV), 164–184 (ITAG…LMSI), and 200–222 (TILE…SLYL).

It belongs to the ATPase A chain family. In terms of assembly, component of the ATP synthase complex composed at least of ATP5F1A/subunit alpha, ATP5F1B/subunit beta, ATP5MC1/subunit c (homooctomer), MT-ATP6/subunit a, MT-ATP8/subunit 8, ATP5ME/subunit e, ATP5MF/subunit f, ATP5MG/subunit g, ATP5MK/subunit k, ATP5MJ/subunit j, ATP5F1C/subunit gamma, ATP5F1D/subunit delta, ATP5F1E/subunit epsilon, ATP5PF/subunit F6, ATP5PB/subunit b, ATP5PD/subunit d, ATP5PO/subunit OSCP. ATP synthase complex consists of a soluble F(1) head domain (subunits alpha(3) and beta(3)) - the catalytic core - and a membrane F(0) domain - the membrane proton channel (subunits c, a, 8, e, f, g, k and j). These two domains are linked by a central stalk (subunits gamma, delta, and epsilon) rotating inside the F1 region and a stationary peripheral stalk (subunits F6, b, d, and OSCP). Interacts with DNAJC30; interaction is direct.

It is found in the mitochondrion inner membrane. The enzyme catalyses H(+)(in) = H(+)(out). Its function is as follows. Subunit a, of the mitochondrial membrane ATP synthase complex (F(1)F(0) ATP synthase or Complex V) that produces ATP from ADP in the presence of a proton gradient across the membrane which is generated by electron transport complexes of the respiratory chain. ATP synthase complex consist of a soluble F(1) head domain - the catalytic core - and a membrane F(1) domain - the membrane proton channel. These two domains are linked by a central stalk rotating inside the F(1) region and a stationary peripheral stalk. During catalysis, ATP synthesis in the catalytic domain of F(1) is coupled via a rotary mechanism of the central stalk subunits to proton translocation. With the subunit c (ATP5MC1), forms the proton-conducting channel in the F(0) domain, that contains two crucial half-channels (inlet and outlet) that facilitate proton movement from the mitochondrial intermembrane space (IMS) into the matrix. Protons are taken up via the inlet half-channel and released through the outlet half-channel, following a Grotthuss mechanism. The sequence is that of ATP synthase F(0) complex subunit a from Bos mutus grunniens (Wild yak).